The chain runs to 188 residues: Abscisic acid receptor PYL8 (188 aa).

The segment at 25–176 (HELVDNQCSS…NLKSLADISE (152 aa)) is START-like. A disulfide bridge links C32 with C157. Residue K61 coordinates abscisate. T77 bears the Phosphothreonine; by CARK1 mark. Positions 85-89 (SGLPA) match the Gate loop motif. Abscisate is bound by residues 89–94 (ATRSTE), 116–122 (RLKNYSS), and E141. Positions 115–117 (HRL) match the Latch loop motif.

The protein belongs to the PYR/PYL/RCAR abscisic acid intracellular receptor family. Monomer. Homodimer. Binds ABA on one subunit only. interacts with ABI1 and HAB1, and possibly with other PP2Cs. Binds to CARs protein in an ABA-independent manner, both at the plasma membrane and in the nucleus. Interacts directly with CAR1 and CAR4. Interacts with MYB44, MYB73 and MYB77 in an ABA-independent manner. Interacts with DDA1. Interacts with CARK1 in the cytosol. Binds to ABI1 when phosphorylated by CARK1. Interacts with AIP1 in the nucleus. Phosphorylated by CARK1 especially in response to abscisic acid (ABA); this phosphorylation promotes its stability and inhibitory ability to ABI1. Post-translationally, ubiquitinated in DDA1- and CDD complex-dependent manner. Ubiquitination leads to its subsequent proteasomal degradation.

The protein localises to the cytoplasm. The protein resides in the cytosol. It is found in the nucleus. It localises to the cell membrane. Functionally, receptor for abscisic acid (ABA) required for ABA-mediated responses such as stomatal closure and germination inhibition. Inhibits the activity of group-A protein phosphatases type 2C (PP2Cs) in an ABA-independent manner but more efficiently when activated by ABA. Confers enhanced sensitivity to ABA. Can be activated by both (-)-ABA and (+)-ABA. Mediates crosstalk between ABA and auxin signaling to regulate lateral root growth. Required for lateral root growth suppression by ABA. In response to auxin, promotes lateral root growth by enhancing MYB77-dependent transcription of the auxin-responsive gene IAA19. Enhances the abilities of MYB44 and MYB73 to activate IAA19 gene. The chain is Abscisic acid receptor PYL8 from Arabidopsis thaliana (Mouse-ear cress).